The chain runs to 365 residues: Potassium channel subfamily K member 9 (365 aa).

The Cytoplasmic segment spans residues 1-8 (MKKQNVRT). A helical transmembrane segment spans residues 9 to 29 (LSLIACTFTYLLVGAAVFDAL). Residues 30-88 (ESDHEMREEEKLKAEEIRIRGKYNISTEDYRQLELVILQSEPHRAGVQWKFAGSFYFAI) are Extracellular-facing. N53 carries N-linked (GlcNAc...) asparagine glycosylation. An intramembrane region (pore-forming) is located at residues 89-101 (TVITTIGYGHAAP). K(+) contacts are provided by T93, I94, G95, and Y96. Positions 93–98 (TIGYGH) are selectivity filter 1. The Extracellular portion of the chain corresponds to 102 to 107 (GTDAGK). Residues 108 to 128 (AFCMFYAVLGIPLTLVMFQSL) form a helical membrane-spanning segment. The Cytoplasmic segment spans residues 129–158 (GERMNTFVRYLLKRIKKCCGMRNTEVSMEN). The helical transmembrane segment at 159-179 (MVTVGFFSCMGTLCIGAAAFS) threads the bilayer. At 180–194 (QCEEWSFFHAYYYCF) the chain is on the extracellular side. The pore-forming intramembrane region spans 195 to 207 (ITLTTIGFGDYVA). T199, I200, G201, and F202 together coordinate K(+). Positions 199–204 (TIGFGD) are selectivity filter 2. The Extracellular portion of the chain corresponds to 208–218 (LQSKGALQRKP). A helical membrane pass occupies residues 219–239 (FYVAFSFMYILVGLTVIGAFL). Residues 240 to 365 (NLVVLRFLTM…HRLMLRRKSV (126 aa)) are Cytoplasmic-facing. The interval 243-248 (VLRFLT) is X-gate.

The protein belongs to the two pore domain potassium channel (TC 1.A.1.8) family. As to quaternary structure, homodimer. Heterodimer with KCNK1. Heterodimer with KCNK3. In terms of tissue distribution, highly expressed in the brain.

It localises to the cell membrane. Its subcellular location is the mitochondrion inner membrane. The protein resides in the cell projection. It is found in the dendrite. It catalyses the reaction K(+)(in) = K(+)(out). The catalysed reaction is Na(+)(in) = Na(+)(out). Inhibited by extracellular acidification. Functionally, k(+) channel that conducts voltage-dependent outward rectifying currents upon membrane depolarization. Voltage sensing is coupled to K(+) electrochemical gradient in an 'ion flux gating' mode where outward but not inward ion flow opens the gate. Changes ion selectivity and becomes permeable to Na(+) ions in response to extracellular acidification. Protonation of the pH sensor His-98 stabilizes C-type inactivation conformation likely converting the channel from outward K(+)-conducting, to inward Na(+)-conducting to nonconductive state. Homo- and heterodimerizes to form functional channels with distinct regulatory and gating properties. Allows K(+) currents with fast-gating kinetics important for the repolarization and hyperpolarization phases of action potentials. In granule neurons, hyperpolarizes the resting membrane potential to limit intrinsic neuronal excitability, but once the action potential threshold is reached, supports high-frequency action potential firing and increased neuronal excitability. Homomeric and/or heteromeric KCNK3:KCNK9 channels operate in cerebellar granule cells, whereas heteromeric KCNK1:KCNK9 enables currents in hippocampal dentate gyrus granule neurons. Dispensable for central chemosensory respiration i.e. breathing controlled by brainstem CO2/pH, it rather conducts pH-sensitive currents and controls the firing rate of serotonergic raphe neurons involved in potentiation of the respiratory chemoreflex. In retinal ganglion cells, mediates outward rectifying currents that regulate action potentials in response to acidification of the synaptic cleft. Involved in transmission of image-forming and nonimage-forming visual information in the retina. In adrenal gland, contributes to the maintenance of a hyperpolarized resting membrane potential of aldosterone-producing cells at zona glomerulosa and limits aldosterone release as part of a regulatory mechanism that controls arterial blood pressure and electrolyte homeostasis. The polypeptide is Potassium channel subfamily K member 9 (KCNK9) (Cavia porcellus (Guinea pig)).